A 231-amino-acid chain; its full sequence is U1 small nuclear ribonucleoprotein C (231 aa).

A Matrin-type zinc finger spans residues 4 to 36; it reads YYCEYCHSYLTHDTLSVRKSHLVGKNHLRITAD. Positions 49 to 61 are enriched in basic residues; it reads HNHKRRHIGKRGR. Disordered stretches follow at residues 49–71, 137–177, and 205–231; these read HNHK…SQNE, PQRA…LEPP, and ESKK…RYGN.

It belongs to the U1 small nuclear ribonucleoprotein C family. In terms of assembly, U1 snRNP is composed of the 7 core Sm proteins SMB1, SMD1, SMD2, SMD3, SME1, SMX3 and SMX2 (Sm proteins B, D1, D2, D3, E, F and G, respectively) that assemble in a heptameric protein ring on the Sm site of the small nuclear RNA to form the core snRNP, and at least 10 U1 snRNP-specific proteins SNP1/U1-70K, MUD1/U1-A, YHC1/U1-C, LUC7, NAM8, PRP39, PRP40, PRP42, SNU56 and SNU71. YHC1/U1-C interacts with U1 snRNA and the 5' splice-site region of the pre-mRNA.

It is found in the nucleus. In terms of biological role, component of the spliceosomal U1 snRNP, which is essential for recognition of the pre-mRNA 5' splice-site and the subsequent assembly of the spliceosome. YHC1/U1-C is directly involved in initial 5' splice-site recognition for both constitutive and regulated alternative splicing. The interaction with the 5' splice-site seems to precede base-pairing between the pre-mRNA and the U1 snRNA. Stimulates commitment or early (E) complex formation by stabilizing the base pairing of the 5' end of the U1 snRNA and the 5' splice-site region. The chain is U1 small nuclear ribonucleoprotein C from Saccharomyces cerevisiae (strain ATCC 204508 / S288c) (Baker's yeast).